Consider the following 1034-residue polypeptide: Potassium-transporting ATPase alpha chain 1 (1034 aa).

Topologically, residues Met-1 to Pro-97 are cytoplasmic. Tyr-7 and Tyr-10 each carry phosphotyrosine. The segment at Leu-14–Lys-41 is disordered. The span at Met-26 to Lys-39 shows a compositional bias: basic residues. Position 27 is a phosphoserine (Ser-27). Residues Glu-98–Ala-118 traverse the membrane as a helical segment. At Ala-119–Tyr-141 the chain is on the lumenal side. Residues Leu-142–Phe-162 traverse the membrane as a helical segment. Residues Lys-163–Ile-298 lie on the Cytoplasmic side of the membrane. Positions Asn-225–Pro-239 are enriched in polar residues. The segment at Asn-225–Ser-245 is disordered. A helical membrane pass occupies residues Glu-299–Val-318. The Lumenal segment spans residues Val-319–Ala-330. The chain crosses the membrane as a helical span at residues Met-331 to Ala-348. Val-339, Ala-340, Val-342, and Glu-344 together coordinate K(+). Residues Thr-349–Leu-782 are Cytoplasmic-facing. The active-site 4-aspartylphosphate intermediate is the Asp-386. 2 residues coordinate Mg(2+): Asp-386 and Thr-388. Phosphoserine occurs at positions 462 and 600. The Mg(2+) site is built by Asp-727 and Asp-731. Residues Lys-783–Ile-802 traverse the membrane as a helical segment. Residue Glu-796 coordinates K(+). At Tyr-803–Leu-812 the chain is on the lumenal side. The helical transmembrane segment at Gly-813–Ala-833 threads the bilayer. Glu-821 serves as a coordination point for K(+). Topologically, residues Tyr-834–Arg-853 are cytoplasmic. Ser-839 carries the post-translational modification Phosphoserine. Residues Leu-854 to Phe-876 traverse the membrane as a helical segment. At Thr-877 to Cys-928 the chain is on the lumenal side. Residues Tyr-929–Lys-948 traverse the membrane as a helical segment. At Thr-949–Asn-962 the chain is on the cytoplasmic side. Position 953 is a phosphoserine; by PKA (Ser-953). A helical transmembrane segment spans residues Arg-963–Tyr-981. The Lumenal segment spans residues Cys-982–Tyr-996. The helical transmembrane segment at Gln-997–Lys-1017 threads the bilayer. Residues Leu-1018 to Tyr-1034 are Cytoplasmic-facing.

The protein belongs to the cation transport ATPase (P-type) (TC 3.A.3) family. Type IIC subfamily. As to quaternary structure, the gastric H(+)/K(+) ATPase pump is composed of the catalytic alpha subunit ATP4A and the regulatory beta subunit ATP4B. Interacts (via the P-domain) with ATP4B (via N-terminus); this interaction stabilizes the lumenal-open E2 conformation state and prevents the reverse reaction of the transport cycle.

It is found in the apical cell membrane. It catalyses the reaction K(+)(out) + ATP + H2O + H(+)(in) = K(+)(in) + ADP + phosphate + 2 H(+)(out). In terms of biological role, the catalytic subunit of the gastric H(+)/K(+) ATPase pump which transports H(+) ions in exchange for K(+) ions across the apical membrane of parietal cells. Uses ATP as an energy source to pump H(+) ions to the gastric lumen while transporting K(+) ion from the lumen into the cell. Remarkably generates a million-fold proton gradient across the gastric parietal cell membrane, acidifying the gastric juice down to pH 1. Within a transport cycle, the transfer of a H(+) ion across the membrane is coupled to ATP hydrolysis and is associated with a transient phosphorylation that shifts the pump conformation from inward-facing (E1) to outward-facing state (E2). The release of the H(+) ion in the stomach lumen is followed by binding of K(+) ion converting the pump conformation back to the E1 state. This is Potassium-transporting ATPase alpha chain 1 (ATP4A) from Canis lupus familiaris (Dog).